We begin with the raw amino-acid sequence, 418 residues long: E3 ubiquitin-protein ligase pellino homolog 1 (418 aa).

The FHA; atypical domain occupies 13–200; that stretch reads APVKYGELIV…MHPRNGFTED (188 aa). Ser-121 is subject to Phosphoserine. Position 127 is a phosphothreonine (Thr-127). Residues 311–399 are ring-like domain; necessary for ubiquitination of RIPK3; it reads CGHVHGYHNW…TFHAACPFCA (89 aa).

The protein belongs to the pellino family. As to quaternary structure, interacts with MAP3K7. Upon IL1B treatment, forms a complex with TRAF6, IRAK1, IRAK4 and MYD88; this complex recruits MAP3K7/TAK1, TAB1 and TAB2 to mediate NF-kappa-B activation. Direct binding of SMAD6 to PELI1 prevents the complex formation and hence negatively regulates IL1R-TLR signaling and eventually NF-kappa-B-mediated gene expression. Interacts (via atypical FHA domain) with RIPK3. Binds preferentially to the 'Thr-182' phosphorylated form of RIPK3. Interacts with RIPK1. Post-translationally, phosphorylation by IRAK1 and IRAK4 enhances its E3 ligase activity. Phosphorylated by ATM in response to DNA damage, promoting localization to DNA double-strand breaks (DSBs) and ability to mediate 'Lys-63'-linked ubiquitination of NBN. In terms of processing, sumoylated.

It is found in the chromosome. It carries out the reaction S-ubiquitinyl-[E2 ubiquitin-conjugating enzyme]-L-cysteine + [acceptor protein]-L-lysine = [E2 ubiquitin-conjugating enzyme]-L-cysteine + N(6)-ubiquitinyl-[acceptor protein]-L-lysine.. Its pathway is protein modification; protein ubiquitination. Its function is as follows. E3 ubiquitin ligase catalyzing the covalent attachment of ubiquitin moieties onto substrate proteins. Involved in the TLR and IL-1 signaling pathways via interaction with the complex containing IRAK kinases and TRAF6. Acts as a positive regulator of inflammatory response in microglia through activation of NF-kappa-B and MAP kinase. Mediates 'Lys-63'-linked polyubiquitination of IRAK1 allowing subsequent NF-kappa-B activation. Conjugates 'Lys-63'-linked ubiquitin chains to the adapter protein ASC/PYCARD, which in turn is crucial for NLRP3 inflammasome activation. Mediates 'Lys-48'-linked polyubiquitination of RIPK3 leading to its subsequent proteasome-dependent degradation; preferentially recognizes and mediates the degradation of the 'Thr-182' phosphorylated form of RIPK3. Negatively regulates necroptosis by reducing RIPK3 expression. Mediates 'Lys-63'-linked ubiquitination of RIPK1. Following phosphorylation by ATM, catalyzes 'Lys-63'-linked ubiquitination of NBN, promoting DNA repair via homologous recombination. Negatively regulates activation of the metabolic mTORC1 signaling pathway by mediating 'Lys-63'-linked ubiquitination of mTORC1-inhibitory protein TSC1 and thereby promoting TSC1/TSC2 complex stability. This Mus musculus (Mouse) protein is E3 ubiquitin-protein ligase pellino homolog 1 (Peli1).